Here is a 291-residue protein sequence, read N- to C-terminus: Glycine--tRNA ligase alpha subunit (291 aa).

The protein belongs to the class-II aminoacyl-tRNA synthetase family. In terms of assembly, tetramer of two alpha and two beta subunits.

The protein resides in the cytoplasm. It catalyses the reaction tRNA(Gly) + glycine + ATP = glycyl-tRNA(Gly) + AMP + diphosphate. The protein is Glycine--tRNA ligase alpha subunit of Geotalea uraniireducens (strain Rf4) (Geobacter uraniireducens).